Here is a 131-residue protein sequence, read N- to C-terminus: Large ribosomal subunit protein bL17 (131 aa).

This sequence belongs to the bacterial ribosomal protein bL17 family. Part of the 50S ribosomal subunit. Contacts protein L32.

The protein is Large ribosomal subunit protein bL17 of Burkholderia multivorans (strain ATCC 17616 / 249).